Reading from the N-terminus, the 167-residue chain is MAKNNESPKKEREKAESDLTEKVLHINRCSKVVKGGRKFSFSALILVGDGKGRIGYGFAKANELTDAIRKGGEAARKNMISCPTEGTTIPHEVTVQWDGASVLLKPAPFGTGVIAGSKVRAVLELAGIKDVMAKNLGSSNPINQVKATFQAIQQLLTRDEIKQRRGV.

The S5 DRBM domain maps to leucine 19–cysteine 82.

This sequence belongs to the universal ribosomal protein uS5 family. As to quaternary structure, part of the 30S ribosomal subunit. Contacts proteins S4 and S8.

With S4 and S12 plays an important role in translational accuracy. Its function is as follows. Located at the back of the 30S subunit body where it stabilizes the conformation of the head with respect to the body. This chain is Small ribosomal subunit protein uS5, found in Protochlamydia amoebophila (strain UWE25).